The chain runs to 520 residues: Probable cytochrome P450 6v1 (520 aa).

Cysteine 465 serves as a coordination point for heme.

This sequence belongs to the cytochrome P450 family. The cofactor is heme.

The protein localises to the endoplasmic reticulum membrane. The protein resides in the microsome membrane. Functionally, may be involved in the metabolism of insect hormones and in the breakdown of synthetic insecticides. The sequence is that of Probable cytochrome P450 6v1 (Cyp6v1) from Drosophila melanogaster (Fruit fly).